The following is a 274-amino-acid chain: 2,3,4,5-tetrahydropyridine-2,6-dicarboxylate N-succinyltransferase (274 aa).

Substrate-binding residues include Arg-106 and Asp-143.

Belongs to the transferase hexapeptide repeat family. In terms of assembly, homotrimer.

It localises to the cytoplasm. It carries out the reaction (S)-2,3,4,5-tetrahydrodipicolinate + succinyl-CoA + H2O = (S)-2-succinylamino-6-oxoheptanedioate + CoA. The protein operates within amino-acid biosynthesis; L-lysine biosynthesis via DAP pathway; LL-2,6-diaminopimelate from (S)-tetrahydrodipicolinate (succinylase route): step 1/3. In Rickettsia typhi (strain ATCC VR-144 / Wilmington), this protein is 2,3,4,5-tetrahydropyridine-2,6-dicarboxylate N-succinyltransferase.